Here is a 126-residue protein sequence, read N- to C-terminus: Fluoride-specific ion channel FluC (126 aa).

Transmembrane regions (helical) follow at residues 6-26 (FVAVGVGAAAGAWLRWGFAVL), 36-56 (YGTLAANLLGGYLVGLAVGFF), 69-89 (LAITGFLGGLTTFSTFSSEVV), and 99-119 (WAGLHLLLHLGGSLLLTAFGL). Na(+) is bound by residues G76 and T79.

This sequence belongs to the fluoride channel Fluc/FEX (TC 1.A.43) family.

It is found in the cell inner membrane. The catalysed reaction is fluoride(in) = fluoride(out). Na(+) is not transported, but it plays an essential structural role and its presence is essential for fluoride channel function. Its function is as follows. Fluoride-specific ion channel. Important for reducing fluoride concentration in the cell, thus reducing its toxicity. This Cupriavidus necator (strain ATCC 17699 / DSM 428 / KCTC 22496 / NCIMB 10442 / H16 / Stanier 337) (Ralstonia eutropha) protein is Fluoride-specific ion channel FluC.